Consider the following 62-residue polypeptide: MKSTLMTASLLILVLLSIVDYASVYAELIDSEISMERHWINACFNICMKISSDQKYCKSFCG.

A signal peptide spans 1–26 (MKSTLMTASLLILVLLSIVDYASVYA). The propeptide occupies 27 to 36 (ELIDSEISME). 2 disulfides stabilise this stretch: cysteine 43-cysteine 61 and cysteine 47-cysteine 57.

The protein belongs to the short scorpion toxin superfamily. Potassium channel inhibitor kappa-KTx family. Kappa-KTx 3 subfamily. Expressed by the venom gland.

Its subcellular location is the secreted. Its function is as follows. Potassium channel inhibitor (Kv). In Heterometrus petersii (Asian forest scorpion), this protein is Potassium channel toxin kappa-KTx 3.2.